The chain runs to 757 residues: Relaxin receptor 1 (757 aa).

The Extracellular portion of the chain corresponds to 1-409; sequence MTSGSVFFYI…ENLLASIIQR (409 aa). One can recognise an LDL-receptor class A domain in the interval 26–63; it reads KCSLGYFPCGNITKCLPQLLHCNGVDDCGNQADEDNCG. Intrachain disulfides connect C27–C40, C34–C53, and C47–C62. Residue N36 is glycosylated (N-linked (GlcNAc...) asparagine). Residues L45, N48, V50, D52, D58, and E59 each contribute to the Ca(2+) site. The 37-residue stretch at 91-127 folds into the LRRNT domain; it reads ETPECLVGSVPVQCLCQGLELDCDETNLRAVPSVSSN. Residue N127 is glycosylated (N-linked (GlcNAc...) asparagine). 9 LRR repeats span residues 151–172, 175–196, 199–220, 223–244, 248–269, 272–293, 296–317, 320–341, and 344–365; these read DLQK…AFRG, SLTK…VFED, RLEW…TFYG, SLIL…PLCQ, RLHW…TFIS, NLTV…TFAP, KLDE…IFKD, ELSQ…QFDY, and KLKS…MFRP. 2 N-linked (GlcNAc...) asparagine glycosylation sites follow: N264 and N272. A glycan (N-linked (GlcNAc...) asparagine) is linked at N325. N-linked (GlcNAc...) asparagine glycosylation occurs at N368. Residues 410 to 430 form a helical membrane-spanning segment; sequence VFVWVVSAVTCFGNIFVICMR. The Cytoplasmic segment spans residues 431–443; sequence PYIRSENKLYAMS. The helical transmembrane segment at 444–464 threads the bilayer; the sequence is IISLCCADCLMGIYLFVIGGF. Over 465–486 the chain is Extracellular; the sequence is DLKFRGEYNKHAQLWMESTHCQ. An intrachain disulfide couples C485 to C563. The chain crosses the membrane as a helical span at residues 487–507; sequence LVGSLAILSTEVSVLLLTFLT. Residues 508 to 527 are Cytoplasmic-facing; that stretch reads LEKYICIVYPFRCVRPGKCR. A helical transmembrane segment spans residues 528 to 548; sequence TITVLILIWITGFIVAFIPLS. Residues 549–577 are Extracellular-facing; the sequence is NKEFFKNYYGTNGVCFPLHSEDTESIGAQ. The helical transmembrane segment at 578–598 threads the bilayer; it reads IYSVAIFLGINLAAFIIIVFS. The Cytoplasmic portion of the chain corresponds to 599–629; it reads YGSMFYSVHQSAITATEIRNQVKKEMILAKR. A helical membrane pass occupies residues 630 to 650; that stretch reads FFFIVFTDALCWIPIFVVKFL. S651 is a topological domain (extracellular). A helical transmembrane segment spans residues 652–672; the sequence is LLQVEIPGTITSWVVIFILPI. Residues 673–757 lie on the Cytoplasmic side of the membrane; sequence NSALNPILYT…SQSTRLNSYS (85 aa).

It belongs to the G-protein coupled receptor 1 family. In terms of assembly, interacts with C1QTNF8. Expressed in the brain, kidney, testis, placenta, uterus, ovary, adrenal, prostate, skin and heart. Not detected in spleen.

It localises to the cell membrane. In terms of biological role, receptor for relaxins. The activity of this receptor is mediated by G proteins leading to stimulation of adenylate cyclase and an increase of cAMP. Binding of the ligand may also activate a tyrosine kinase pathway that inhibits the activity of a phosphodiesterase that degrades cAMP. This chain is Relaxin receptor 1 (RXFP1), found in Homo sapiens (Human).